A 410-amino-acid polypeptide reads, in one-letter code: Argininosuccinate synthase (410 aa).

Residue 10–18 (AYSGGLDTS) participates in ATP binding. Positions 88 and 93 each coordinate L-citrulline. Glycine 118 is a binding site for ATP. Residues threonine 120, asparagine 124, and aspartate 125 each coordinate L-aspartate. Asparagine 124 is a binding site for L-citrulline. Residues arginine 128, serine 177, serine 186, glutamate 262, and tyrosine 274 each coordinate L-citrulline.

The protein belongs to the argininosuccinate synthase family. Type 1 subfamily. As to quaternary structure, homotetramer.

The protein localises to the cytoplasm. The catalysed reaction is L-citrulline + L-aspartate + ATP = 2-(N(omega)-L-arginino)succinate + AMP + diphosphate + H(+). It functions in the pathway amino-acid biosynthesis; L-arginine biosynthesis; L-arginine from L-ornithine and carbamoyl phosphate: step 2/3. The chain is Argininosuccinate synthase from Thermoanaerobacter pseudethanolicus (strain ATCC 33223 / 39E) (Clostridium thermohydrosulfuricum).